A 184-amino-acid polypeptide reads, in one-letter code: Casparian strip membrane protein 3 (184 aa).

The Cytoplasmic portion of the chain corresponds to 1-22; that stretch reads MEGSGEHGETSKGPLSKGVSRG. A helical transmembrane segment spans residues 23-43; sequence LCILDLIFRVIAVIGTLASAI. The Extracellular segment spans residues 44–72; the sequence is AMGTTNQTMPFFTQFVQFKERYSDLPTLT. N49 carries N-linked (GlcNAc...) asparagine glycosylation. A helical transmembrane segment spans residues 73–93; that stretch reads FFVVANSIASAYLIISLPLSI. Topologically, residues 94–105 are cytoplasmic; it reads VHIIRSRAKYSR. Residues 106–126 form a helical membrane-spanning segment; sequence LILIFFDVAMLALVTAAASAG. The Extracellular portion of the chain corresponds to 127 to 159; that stretch reads AAIVYLAHNGNVSANWFAICQQFDSFCERISGS. N-linked (GlcNAc...) asparagine glycosylation is present at N137. A helical membrane pass occupies residues 160-180; that stretch reads LIGSFAAMVVLILLILLSAVA. Topologically, residues 181 to 184 are cytoplasmic; it reads LARR.

Belongs to the Casparian strip membrane proteins (CASP) family. In terms of assembly, homodimer and heterodimers.

It localises to the cell membrane. Regulates membrane-cell wall junctions and localized cell wall deposition. Required for establishment of the Casparian strip membrane domain (CSD) and the subsequent formation of Casparian strips, a cell wall modification of the root endodermis that determines an apoplastic barrier between the intraorganismal apoplasm and the extraorganismal apoplasm and prevents lateral diffusion. This Brachypodium distachyon (Purple false brome) protein is Casparian strip membrane protein 3.